We begin with the raw amino-acid sequence, 314 residues long: uncharacterized protein (314 aa).

This is an uncharacterized protein from Acanthamoeba polyphaga mimivirus (APMV).